The following is a 229-amino-acid chain: 7-cyano-7-deazaguanine synthase (229 aa).

L9 to L19 contributes to the ATP binding site. Zn(2+) contacts are provided by C188, C198, C201, and C204.

This sequence belongs to the QueC family. Requires Zn(2+) as cofactor.

It catalyses the reaction 7-carboxy-7-deazaguanine + NH4(+) + ATP = 7-cyano-7-deazaguanine + ADP + phosphate + H2O + H(+). It functions in the pathway purine metabolism; 7-cyano-7-deazaguanine biosynthesis. Its function is as follows. Catalyzes the ATP-dependent conversion of 7-carboxy-7-deazaguanine (CDG) to 7-cyano-7-deazaguanine (preQ(0)). In Methylobacillus flagellatus (strain ATCC 51484 / DSM 6875 / VKM B-1610 / KT), this protein is 7-cyano-7-deazaguanine synthase.